Consider the following 35-residue polypeptide: Coatomer subunit alpha (35 aa).

Oligomeric complex that consists of at least the alpha, beta, beta', gamma, delta, epsilon and zeta subunits. Interacts with SCYL1. Interacts with JAGN1. Interacts with TMEM41B. Interacts with SVEP1. Probably interacts with PEX11A. As to expression, gastric, duodenal and jejunal mucosa. Circulates in the blood. Seems to be confined to specific endocrine cells.

Functionally, xenin stimulates exocrine pancreatic secretion. It inhibits pentagastrin-stimulated secretion of acid, to induce exocrine pancreatic secretion and to affect small and large intestinal motility. In the gut, xenin interacts with the neurotensin receptor. This is Coatomer subunit alpha (COPA) from Canis lupus familiaris (Dog).